The sequence spans 443 residues: BBSome complex member BBS5 homolog (443 aa).

Belongs to the BBS5 family.

It localises to the cytoplasm. It is found in the cytoskeleton. Its subcellular location is the flagellum axoneme. This Giardia intestinalis (strain ATCC 50803 / WB clone C6) (Giardia lamblia) protein is BBSome complex member BBS5 homolog.